Reading from the N-terminus, the 88-residue chain is Putative septation protein SpoVG (88 aa).

It belongs to the SpoVG family.

Functionally, could be involved in septation. The chain is Putative septation protein SpoVG from Caldicellulosiruptor bescii (strain ATCC BAA-1888 / DSM 6725 / KCTC 15123 / Z-1320) (Anaerocellum thermophilum).